The chain runs to 687 residues: Transketolase 2 (687 aa).

Substrate is bound at residue His-47. Residues His-87 and 135-137 contribute to the thiamine diphosphate site; that span reads GPL. Asp-176 contributes to the Mg(2+) binding site. Residues Gly-177 and Asn-206 each coordinate thiamine diphosphate. The Mg(2+) site is built by Asn-206 and Ile-208. Positions 282, 379, and 406 each coordinate substrate. His-282 provides a ligand contact to thiamine diphosphate. The active-site Proton donor is Glu-432. Phe-458 is a binding site for thiamine diphosphate. Substrate is bound by residues His-482, Asp-490, His-494, and Arg-541.

The protein belongs to the transketolase family. It depends on Mg(2+) as a cofactor. The cofactor is thiamine diphosphate.

It catalyses the reaction D-sedoheptulose 7-phosphate + D-glyceraldehyde 3-phosphate = aldehydo-D-ribose 5-phosphate + D-xylulose 5-phosphate. With respect to regulation, activity is increased sixfold following autotrophic growth on methanol compared with that of heterotrophically grown cells. In terms of biological role, catalyzes the transfer of a two-carbon ketol group from a ketose donor to an aldose acceptor, via a covalent intermediate with the cofactor thiamine pyrophosphate. The chain is Transketolase 2 from Xanthobacter flavus.